The sequence spans 273 residues: Imidazole glycerol phosphate synthase subunit HisF (273 aa).

Residues Asp11 and Asp134 contribute to the active site.

This sequence belongs to the HisA/HisF family. Heterodimer of HisH and HisF.

Its subcellular location is the cytoplasm. The enzyme catalyses 5-[(5-phospho-1-deoxy-D-ribulos-1-ylimino)methylamino]-1-(5-phospho-beta-D-ribosyl)imidazole-4-carboxamide + L-glutamine = D-erythro-1-(imidazol-4-yl)glycerol 3-phosphate + 5-amino-1-(5-phospho-beta-D-ribosyl)imidazole-4-carboxamide + L-glutamate + H(+). It participates in amino-acid biosynthesis; L-histidine biosynthesis; L-histidine from 5-phospho-alpha-D-ribose 1-diphosphate: step 5/9. In terms of biological role, IGPS catalyzes the conversion of PRFAR and glutamine to IGP, AICAR and glutamate. The HisF subunit catalyzes the cyclization activity that produces IGP and AICAR from PRFAR using the ammonia provided by the HisH subunit. The sequence is that of Imidazole glycerol phosphate synthase subunit HisF from Methanosarcina mazei (strain ATCC BAA-159 / DSM 3647 / Goe1 / Go1 / JCM 11833 / OCM 88) (Methanosarcina frisia).